The following is a 333-amino-acid chain: Syntaxin-4 (333 aa).

The Cytoplasmic portion of the chain corresponds to methionine 1–lysine 312. Residues tyrosine 50–serine 66 are compositionally biased toward low complexity. The segment at tyrosine 50 to glycine 81 is disordered. A coiled-coil region spans residues tyrosine 91–asparagine 116. The t-SNARE coiled-coil homology domain occupies leucine 239–alanine 301. The chain crosses the membrane as a helical; Anchor for type IV membrane protein span at residues isoleucine 313–leucine 333.

Belongs to the syntaxin family.

The protein resides in the membrane. In terms of biological role, potentially involved in docking of synaptic vesicles at presynaptic active zones. The sequence is that of Syntaxin-4 from Drosophila melanogaster (Fruit fly).